Reading from the N-terminus, the 143-residue chain is UPF0299 membrane protein CGSHiEE_04225 (143 aa).

4 helical membrane passes run 1-21 (MIQK…MLSL), 33-52 (VPGS…TRVI), 60-80 (GASL…VGII), and 92-112 (ILLV…GFLG).

It belongs to the UPF0299 family.

Its subcellular location is the cell inner membrane. In Haemophilus influenzae (strain PittEE), this protein is UPF0299 membrane protein CGSHiEE_04225.